Consider the following 95-residue polypeptide: MKISKEEVKHIAMLSRLELNEEEIGVYQEQLSRILDYIEKLNEIDTTLVEPTSHVIELKNVFRDDNVKGSISRDEALKNAPDQTDKFFRVPKIIE.

The protein belongs to the GatC family. As to quaternary structure, heterotrimer of A, B and C subunits.

The catalysed reaction is L-glutamyl-tRNA(Gln) + L-glutamine + ATP + H2O = L-glutaminyl-tRNA(Gln) + L-glutamate + ADP + phosphate + H(+). It catalyses the reaction L-aspartyl-tRNA(Asn) + L-glutamine + ATP + H2O = L-asparaginyl-tRNA(Asn) + L-glutamate + ADP + phosphate + 2 H(+). Functionally, allows the formation of correctly charged Asn-tRNA(Asn) or Gln-tRNA(Gln) through the transamidation of misacylated Asp-tRNA(Asn) or Glu-tRNA(Gln) in organisms which lack either or both of asparaginyl-tRNA or glutaminyl-tRNA synthetases. The reaction takes place in the presence of glutamine and ATP through an activated phospho-Asp-tRNA(Asn) or phospho-Glu-tRNA(Gln). The protein is Aspartyl/glutamyl-tRNA(Asn/Gln) amidotransferase subunit C of Thermodesulfovibrio yellowstonii (strain ATCC 51303 / DSM 11347 / YP87).